The following is a 740-amino-acid chain: MVFGRITELFTAASSRLPAGSQSSVPYMPTGSSPDVGTSVSDSISIGNGGRKNCLRHSASLQDFSSYHGFDPEESILPREAISWGQNGSSFSKEKGSVPNGTNPSTRRKLIRAVMIVMCLFLFAFLVYIVSMYIYTNWSRGASRYYVVFDCGSTGTRAYVYQASINYKKDSSLPIVMKSLTEGISRKSRGRAYDRMETEPGFDKLVNNRTGLKTAIKPLIQWAEKQIPKNAHRTTSLFVYATAGVRRLRPADSSWILGNVWSILAKSPFTCRREWVKIISGTEEAYFGWTALNYQTSMLGALPKKATFGALDLGGSSLQVTFENEERTHNETNLNLRIGSVNHHLSAYSLAGYGLNDAFDRSVVHLLKKLPNVNKSDLIEGKLEMKHPCLNSGYNGQYICSQCASSVQGGKKGKSGVSIKLVGAPNWGECSALAKNAVNSSEWSNAKHGVDCDLQPCALPDGYPRPHGQFYAVSGFFVVYRFFNLSAEASLDDVLEKGREFCDKAWQVARTSVSPQPFIEQYCFRAPYIVSLLREGLYITDKQIIIGSGSITWTLGVALLESGKALSSTLGLKSYETLSMKINPIALISILILSLLLLLCALSRVSNCLPRFFRKSYLPLFRHNSTSASSVLNIPSPFRFQRWSPMSTGVKTPLSPTVRGSPRRPFSFGSSIQLMESSLYSSSSCVMHSCSSDSLGDIQYDSTGSFWSSPRRSQMRLQSRRSQSREDLSSSLADSHMLKM.

The Cytoplasmic portion of the chain corresponds to 1 to 113 (MVFGRITELF…PSTRRKLIRA (113 aa)). Residues 114–134 (VMIVMCLFLFAFLVYIVSMYI) traverse the membrane as a helical segment. The Extracellular segment spans residues 135-581 (YTNWSRGASR…LKSYETLSMK (447 aa)). Residue N137 is glycosylated (N-linked (GlcNAc...) asparagine). Position 147–157 (147–157 (VVFDCGSTGTR)) interacts with ATP. The N-linked (GlcNAc...) asparagine glycan is linked to N208. The Proton acceptor role is filled by E284. An ATP-binding site is contributed by 309-319 (GALDLGGSSLQ). 4 N-linked (GlcNAc...) asparagine glycosylation sites follow: N330, N374, N439, and N484. A helical transmembrane segment spans residues 582 to 602 (INPIALISILILSLLLLLCAL). Topologically, residues 603 to 740 (SRVSNCLPRF…SLADSHMLKM (138 aa)) are cytoplasmic. Residues 706-740 (FWSSPRRSQMRLQSRRSQSREDLSSSLADSHMLKM) form a disordered region. Over residues 708–721 (SSPRRSQMRLQSRR) the composition is skewed to low complexity.

The protein belongs to the GDA1/CD39 NTPase family. Requires Ca(2+) as cofactor. In terms of tissue distribution, detected in mature pollen grains. Also expressed in more diverse tissues such as roots, leaves, stems, pistils and sepals. More particularly expressed in the vascular bundle.

The protein localises to the membrane. The catalysed reaction is a ribonucleoside 5'-triphosphate + 2 H2O = a ribonucleoside 5'-phosphate + 2 phosphate + 2 H(+). Catalyzes the hydrolysis of phosphoanhydride bonds of nucleoside tri- and di-phosphates. Involved in the regulation of pollen and anther development. The sequence is that of Probable apyrase 7 (APY7) from Arabidopsis thaliana (Mouse-ear cress).